A 212-amino-acid chain; its full sequence is Cytidylate kinase (212 aa).

9–17 provides a ligand contact to ATP; the sequence is GPAAAGKGT.

This sequence belongs to the cytidylate kinase family. Type 1 subfamily.

It localises to the cytoplasm. It carries out the reaction CMP + ATP = CDP + ADP. The catalysed reaction is dCMP + ATP = dCDP + ADP. This chain is Cytidylate kinase, found in Sinorhizobium medicae (strain WSM419) (Ensifer medicae).